A 598-amino-acid polypeptide reads, in one-letter code: NADH-quinone oxidoreductase subunit C/D (598 aa).

An NADH dehydrogenase I subunit C region spans residues 1–189 (MTDLTTSDSL…DPYVLTKQKE (189 aa)). Residues 213 to 598 (DFMFLNLGPN…IDFVMSDVDR (386 aa)) are NADH dehydrogenase I subunit D.

The protein in the N-terminal section; belongs to the complex I 30 kDa subunit family. This sequence in the C-terminal section; belongs to the complex I 49 kDa subunit family. NDH-1 is composed of 13 different subunits. Subunits NuoB, CD, E, F, and G constitute the peripheral sector of the complex.

The protein localises to the cell inner membrane. The enzyme catalyses a quinone + NADH + 5 H(+)(in) = a quinol + NAD(+) + 4 H(+)(out). Functionally, NDH-1 shuttles electrons from NADH, via FMN and iron-sulfur (Fe-S) centers, to quinones in the respiratory chain. The immediate electron acceptor for the enzyme in this species is believed to be ubiquinone. Couples the redox reaction to proton translocation (for every two electrons transferred, four hydrogen ions are translocated across the cytoplasmic membrane), and thus conserves the redox energy in a proton gradient. This is NADH-quinone oxidoreductase subunit C/D from Yersinia pestis bv. Antiqua (strain Angola).